Consider the following 366-residue polypeptide: D-alanine--D-alanine ligase A (366 aa).

An ATP-grasp domain is found at 145–348 (KRLLRDAGLK…YRELITALIE (204 aa)). Position 175 to 230 (175 to 230 (VEQLGLPLFVKPANQGSSVGVSKVKREADLRAALDEAFRYDHKVLVEQAVIGREIE)) interacts with ATP. 3 residues coordinate Mg(2+): aspartate 302, glutamate 315, and asparagine 317.

It belongs to the D-alanine--D-alanine ligase family. Mg(2+) is required as a cofactor. Requires Mn(2+) as cofactor.

It localises to the cytoplasm. The catalysed reaction is 2 D-alanine + ATP = D-alanyl-D-alanine + ADP + phosphate + H(+). It functions in the pathway cell wall biogenesis; peptidoglycan biosynthesis. Functionally, cell wall formation. This Chromobacterium violaceum (strain ATCC 12472 / DSM 30191 / JCM 1249 / CCUG 213 / NBRC 12614 / NCIMB 9131 / NCTC 9757 / MK) protein is D-alanine--D-alanine ligase A.